The primary structure comprises 327 residues: L-serine dehydratase/L-threonine deaminase (327 aa).

Lys-41 is subject to N6-(pyridoxal phosphate)lysine.

This sequence belongs to the serine/threonine dehydratase family. As to quaternary structure, homodimer. Pyridoxal 5'-phosphate is required as a cofactor.

Its subcellular location is the cytoplasm. It carries out the reaction L-serine = pyruvate + NH4(+). The enzyme catalyses L-threonine = 2-oxobutanoate + NH4(+). It participates in carbohydrate biosynthesis; gluconeogenesis. Catalyzes the pyridoxal-phosphate-dependent dehydrative deamination of L-threonine and L-serine to ammonia and alpha-ketobutyrate and pyruvate, respectively. This is L-serine dehydratase/L-threonine deaminase (SDS) from Bos taurus (Bovine).